The following is a 255-amino-acid chain: uncharacterized protein (255 aa).

A divalent metal cation is bound by residues His6, His8, Glu92, His128, His153, and Asp203.

This sequence belongs to the metallo-dependent hydrolases superfamily. TatD-type hydrolase family. A divalent metal cation serves as cofactor.

This is an uncharacterized protein from Bacillus subtilis (strain 168).